We begin with the raw amino-acid sequence, 696 residues long: D-(-)-3-hydroxybutyrate oligomer hydrolase (696 aa).

A signal peptide spans methionine 1–asparagine 26. Residue serine 309 is the Charge relay system of the active site.

Belongs to the D-(-)-3-hydroxybutyrate oligomer hydrolase family.

The protein resides in the secreted. The catalysed reaction is (3R)-hydroxybutanoate dimer + H2O = 2 (R)-3-hydroxybutanoate + H(+). Its pathway is lipid metabolism; butanoate metabolism. In terms of biological role, participates in the degradation of poly-3-hydroxybutyrate (PHB). It works downstream of poly(3-hydroxybutyrate) depolymerase, hydrolyzing D(-)-3-hydroxybutyrate oligomers of various length (3HB-oligomers) into 3HB-monomers. In Burkholderia vietnamiensis (strain G4 / LMG 22486) (Burkholderia cepacia (strain R1808)), this protein is D-(-)-3-hydroxybutyrate oligomer hydrolase.